The chain runs to 276 residues: Putative ABC transporter ATP-binding protein MA_4021 (276 aa).

One can recognise an ABC transporter domain in the interval 5–247 (FDLKNISYSY…DLNLLLSTNL (243 aa)). 38–45 (GSNGSGKS) provides a ligand contact to ATP.

The protein belongs to the ABC transporter superfamily.

The protein resides in the cell membrane. In terms of biological role, probably part of an ABC transporter complex. Responsible for energy coupling to the transport system. This chain is Putative ABC transporter ATP-binding protein MA_4021, found in Methanosarcina acetivorans (strain ATCC 35395 / DSM 2834 / JCM 12185 / C2A).